A 401-amino-acid chain; its full sequence is 8-amino-7-oxononanoate synthase (401 aa).

Substrate is bound at residue Arg24. Residue 111 to 112 (GF) participates in pyridoxal 5'-phosphate binding. His137 contributes to the substrate binding site. 3 residues coordinate pyridoxal 5'-phosphate: Ser183, His211, and Thr240. Lys243 is modified (N6-(pyridoxal phosphate)lysine). Position 357 (Thr357) interacts with substrate.

Belongs to the class-II pyridoxal-phosphate-dependent aminotransferase family. BioF subfamily. In terms of assembly, homodimer. It depends on pyridoxal 5'-phosphate as a cofactor.

The catalysed reaction is 6-carboxyhexanoyl-[ACP] + L-alanine + H(+) = (8S)-8-amino-7-oxononanoate + holo-[ACP] + CO2. It participates in cofactor biosynthesis; biotin biosynthesis. Functionally, catalyzes the decarboxylative condensation of pimeloyl-[acyl-carrier protein] and L-alanine to produce 8-amino-7-oxononanoate (AON), [acyl-carrier protein], and carbon dioxide. The sequence is that of 8-amino-7-oxononanoate synthase from Xanthomonas axonopodis pv. citri (strain 306).